The chain runs to 221 residues: Casparian strip membrane protein 3 (221 aa).

Residues 1 to 12 (MDIEKAGSRREE) show a composition bias toward basic and acidic residues. Residues 1–27 (MDIEKAGSRREEEEPIVQRPKLDKGKG) are disordered. Residues 1 to 58 (MDIEKAGSRREEEEPIVQRPKLDKGKGKAHVFAPPMNYNRIMDKHKQEKMSPAGWKRG) lie on the Cytoplasmic side of the membrane. The chain crosses the membrane as a helical span at residues 59-79 (VAIFDFVLRLIAAITAMAAAA). The Extracellular portion of the chain corresponds to 80–109 (KMATTEETLPFFTQFLQFQADYTDLPTMSS). Residues 110–130 (FVIVNSIVGGYLTLSLPFSIV) traverse the membrane as a helical segment. The Cytoplasmic segment spans residues 131-148 (CILRPLAVPPRLFLILCD). Residues 149–169 (TVMMGLTLMAASASAAIVYLA) form a helical membrane-spanning segment. The Extracellular segment spans residues 170–194 (HNGNSSSNWLPVCQQFGDFCQGTSG). N-linked (GlcNAc...) asparagine glycosylation occurs at asparagine 173. The helical transmembrane segment at 195-215 (AVVASFIAATLLMFLVILSAF) threads the bilayer. Over 216–221 (ALKRTT) the chain is Cytoplasmic.

The protein belongs to the Casparian strip membrane proteins (CASP) family. As to quaternary structure, homodimer and heterodimers with other CASP proteins. Interacts with CASP1, CASP2, CASP4 and CASP5.

It is found in the cell membrane. Functionally, regulates membrane-cell wall junctions and localized cell wall deposition. Required for establishment of the Casparian strip membrane domain (CSD) and the subsequent formation of Casparian strips, a cell wall modification of the root endodermis that determines an apoplastic barrier between the intraorganismal apoplasm and the extraorganismal apoplasm and prevents lateral diffusion. This chain is Casparian strip membrane protein 3 (CASP3), found in Arabidopsis thaliana (Mouse-ear cress).